A 195-amino-acid chain; its full sequence is dTTP/UTP pyrophosphatase (195 aa).

The Proton acceptor role is filled by D73.

This sequence belongs to the Maf family. YhdE subfamily. A divalent metal cation is required as a cofactor.

It is found in the cytoplasm. It carries out the reaction dTTP + H2O = dTMP + diphosphate + H(+). The catalysed reaction is UTP + H2O = UMP + diphosphate + H(+). Nucleoside triphosphate pyrophosphatase that hydrolyzes dTTP and UTP. May have a dual role in cell division arrest and in preventing the incorporation of modified nucleotides into cellular nucleic acids. In Desulfotalea psychrophila (strain LSv54 / DSM 12343), this protein is dTTP/UTP pyrophosphatase.